Here is a 199-residue protein sequence, read N- to C-terminus: Ribonuclease HII (199 aa).

Residues glycine 13–glycine 199 enclose the RNase H type-2 domain. 3 residues coordinate a divalent metal cation: aspartate 19, glutamate 20, and aspartate 110.

It belongs to the RNase HII family. The cofactor is Mn(2+). Mg(2+) is required as a cofactor.

It localises to the cytoplasm. It carries out the reaction Endonucleolytic cleavage to 5'-phosphomonoester.. Functionally, endonuclease that specifically degrades the RNA of RNA-DNA hybrids. This chain is Ribonuclease HII, found in Jannaschia sp. (strain CCS1).